The primary structure comprises 144 residues: 3-hydroxyacyl-[acyl-carrier-protein] dehydratase FabZ (144 aa).

The active site involves His51.

This sequence belongs to the thioester dehydratase family. FabZ subfamily.

The protein resides in the cytoplasm. It carries out the reaction a (3R)-hydroxyacyl-[ACP] = a (2E)-enoyl-[ACP] + H2O. Functionally, involved in unsaturated fatty acids biosynthesis. Catalyzes the dehydration of short chain beta-hydroxyacyl-ACPs and long chain saturated and unsaturated beta-hydroxyacyl-ACPs. This Lactococcus lactis subsp. cremoris (strain MG1363) protein is 3-hydroxyacyl-[acyl-carrier-protein] dehydratase FabZ.